A 510-amino-acid polypeptide reads, in one-letter code: Glycogen synthase (510 aa).

Position 18 (K18) interacts with ADP-alpha-D-glucose.

The protein belongs to the glycosyltransferase 1 family. Bacterial/plant glycogen synthase subfamily.

The catalysed reaction is [(1-&gt;4)-alpha-D-glucosyl](n) + ADP-alpha-D-glucose = [(1-&gt;4)-alpha-D-glucosyl](n+1) + ADP + H(+). The protein operates within glycan biosynthesis; glycogen biosynthesis. In terms of biological role, synthesizes alpha-1,4-glucan chains using ADP-glucose. The polypeptide is Glycogen synthase (Bordetella bronchiseptica (strain ATCC BAA-588 / NCTC 13252 / RB50) (Alcaligenes bronchisepticus)).